Reading from the N-terminus, the 116-residue chain is Propanediol dehydratase-reactivating factor small subunit (116 aa).

Residue Glu-31 participates in Mg(2+) binding.

It belongs to the DdrB/PduH family. Forms a heterotetramer PduG(2)/PduH(2). Mg(2+) is required as a cofactor.

It is found in the bacterial microcompartment. It catalyses the reaction ATP + H2O = ADP + phosphate + H(+). Its pathway is polyol metabolism; 1,2-propanediol degradation. Functionally, small subunit of the propanediol dehydratase-reactivating factor (DDR), which reactivates suicidally inhibited adenosylcobalamin-dependent propanediol dehydratase (diol dehydratase, DDH) found in the bacterial microcompartment (BMC) dedicated to 1,2-propanediol (1,2-PD) degradation. Reactivates inactivated DDH in the presence of ATP, Mg(2+) and free adenosylcobalamin (AdoCbl), by mediating the exchange of the tightly bound damaged cofactor AdoCbl for a free intact one. Its function is as follows. The 1,2-PD-specific bacterial microcompartment (BMC) concentrates low levels of 1,2-PD catabolic enzymes, concentrates volatile reaction intermediates thus enhancing pathway flux and keeps the level of toxic, mutagenic propionaldehyde low. This chain is Propanediol dehydratase-reactivating factor small subunit, found in Salmonella typhimurium (strain LT2 / SGSC1412 / ATCC 700720).